Reading from the N-terminus, the 120-residue chain is Late histone H2A.2.2 (120 aa).

The span at 1-18 (MSGRGKGAKSKSKAKSRS) shows a compositional bias: basic residues. The interval 1 to 22 (MSGRGKGAKSKSKAKSRSSRAG) is disordered. At S2 the chain carries N-acetylserine. A Phosphoserine modification is found at S2. An N5-methylglutamine modification is found at Q104. K119 participates in a covalent cross-link: Glycyl lysine isopeptide (Lys-Gly) (interchain with G-Cter in ubiquitin).

It belongs to the histone H2A family. The nucleosome is a histone octamer containing two molecules each of H2A, H2B, H3 and H4 assembled in one H3-H4 heterotetramer and two H2A-H2B heterodimers. The octamer wraps approximately 147 bp of DNA. Monoubiquitination of Lys-119 gives a specific tag for epigenetic transcriptional repression. Post-translationally, phosphorylation of Ser-2 directly represses transcription.

Its subcellular location is the nucleus. The protein resides in the chromosome. In terms of biological role, core component of nucleosome. Nucleosomes wrap and compact DNA into chromatin, limiting DNA accessibility to the cellular machineries which require DNA as a template. Histones thereby play a central role in transcription regulation, DNA repair, DNA replication and chromosomal stability. DNA accessibility is regulated via a complex set of post-translational modifications of histones, also called histone code, and nucleosome remodeling. The sequence is that of Late histone H2A.2.2 from Psammechinus miliaris (Green sea urchin).